Reading from the N-terminus, the 290-residue chain is ATP synthase subunit a (290 aa).

Transmembrane regions (helical) follow at residues 54 to 74 (AVHL…ILLF), 115 to 135 (IAPL…LKWI), 136 to 156 (PVDY…KIVP), 164 to 184 (FGLS…VKGF), 201 to 221 (LVPF…LSLA), 233 to 253 (VVFI…NVPW), and 254 to 274 (AIFH…LTVV).

It belongs to the ATPase A chain family. As to quaternary structure, F-type ATPases have 2 components, CF(1) - the catalytic core - and CF(0) - the membrane proton channel. CF(1) has five subunits: alpha(3), beta(3), gamma(1), delta(1), epsilon(1). CF(0) has three main subunits: a(1), b(2) and c(9-12). The alpha and beta chains form an alternating ring which encloses part of the gamma chain. CF(1) is attached to CF(0) by a central stalk formed by the gamma and epsilon chains, while a peripheral stalk is formed by the delta and b chains.

Its subcellular location is the cell inner membrane. Key component of the proton channel; it plays a direct role in the translocation of protons across the membrane. This Stutzerimonas stutzeri (strain A1501) (Pseudomonas stutzeri) protein is ATP synthase subunit a.